The chain runs to 176 residues: Small ribosomal subunit protein uS5c (176 aa).

Residues 26 to 89 enclose the S5 DRBM domain; sequence LVERLIKISR…TDGRKNLIEL (64 aa).

The protein belongs to the universal ribosomal protein uS5 family. Part of the 30S ribosomal subunit. Contacts protein S4.

The protein resides in the plastid. Its subcellular location is the chloroplast. In terms of biological role, with S4 and S12 plays an important role in translational accuracy. This Phaeodactylum tricornutum (strain CCAP 1055/1) protein is Small ribosomal subunit protein uS5c (rps5).